The primary structure comprises 273 residues: MSQPILVFDSGIGGLSVLAEIRKRLPHHDYCYVFDNARLPYGELEEQELVSGCVALISQLVERTHACIVVVACNTASTVVLPALRAKLHIPVVGVVPAIKPAALLSKSKRIGLLATPGTVKRHYTHELISQFADDCHVELFGCSELVMMAEHKIATGQLGIARLTQILSPVVDANLDVLVLGCTHFPMLRDELQQVLGLGVTLLDSGAAIAKRVDTLLAHGKNISHNSEYERNGSLMRAFYTKAEITEGLATTLADCGFSTLERITTINSNSD.

Substrate-binding positions include 9–10 (DS) and 41–42 (YG). Residue Cys73 is the Proton donor/acceptor of the active site. A substrate-binding site is contributed by 74–75 (NT). Catalysis depends on Cys183, which acts as the Proton donor/acceptor. Substrate is bound at residue 184 to 185 (TH).

Belongs to the aspartate/glutamate racemases family.

It carries out the reaction L-glutamate = D-glutamate. Its pathway is cell wall biogenesis; peptidoglycan biosynthesis. In terms of biological role, provides the (R)-glutamate required for cell wall biosynthesis. This is Glutamate racemase from Shewanella oneidensis (strain ATCC 700550 / JCM 31522 / CIP 106686 / LMG 19005 / NCIMB 14063 / MR-1).